Here is a 365-residue protein sequence, read N- to C-terminus: S-adenosylmethionine:tRNA ribosyltransferase-isomerase (365 aa).

This sequence belongs to the QueA family. In terms of assembly, monomer.

Its subcellular location is the cytoplasm. It carries out the reaction 7-aminomethyl-7-carbaguanosine(34) in tRNA + S-adenosyl-L-methionine = epoxyqueuosine(34) in tRNA + adenine + L-methionine + 2 H(+). It participates in tRNA modification; tRNA-queuosine biosynthesis. Functionally, transfers and isomerizes the ribose moiety from AdoMet to the 7-aminomethyl group of 7-deazaguanine (preQ1-tRNA) to give epoxyqueuosine (oQ-tRNA). The sequence is that of S-adenosylmethionine:tRNA ribosyltransferase-isomerase from Helicobacter hepaticus (strain ATCC 51449 / 3B1).